Consider the following 358-residue polypeptide: Peroxidase 12 (358 aa).

Positions 1 to 31 (MTKAYSTRVLTFLILISLMAVTLNLFPTVEA) are cleaved as a signal peptide. Intrachain disulfides connect Cys53/Cys134, Cys86/Cys91, Cys140/Cys335, and Cys220/Cys247. Residue His84 is the Proton acceptor of the active site. Residues Asp85, Val88, Gly90, Glu92, and Ser94 each coordinate Ca(2+). Pro183 is a substrate binding site. Asn188 and Asn202 each carry an N-linked (GlcNAc...) asparagine glycan. His213 serves as a coordination point for heme b. Thr214 is a Ca(2+) binding site. Asn251 carries N-linked (GlcNAc...) asparagine glycosylation. Ca(2+) is bound by residues Asp259, Ser262, and Asp267. The N-linked (GlcNAc...) asparagine glycan is linked to Asn334.

The protein belongs to the peroxidase family. Classical plant (class III) peroxidase subfamily. It depends on heme b as a cofactor. Ca(2+) is required as a cofactor. As to expression, expressed in roots and leaves.

Its subcellular location is the secreted. It is found in the vacuole. It carries out the reaction 2 a phenolic donor + H2O2 = 2 a phenolic radical donor + 2 H2O. In terms of biological role, removal of H(2)O(2), oxidation of toxic reductants, biosynthesis and degradation of lignin, suberization, auxin catabolism, response to environmental stresses such as wounding, pathogen attack and oxidative stress. These functions might be dependent on each isozyme/isoform in each plant tissue. Exhibits a Ca(2+)-pectate binding affinity which could be interpreted in vivo as a specificity to interact with the pectic structure of the cell wall. In Arabidopsis thaliana (Mouse-ear cress), this protein is Peroxidase 12 (PER12).